Consider the following 878-residue polypeptide: Valine--tRNA ligase (878 aa).

Positions 43 to 53 match the 'HIGH' region motif; it reads PYPTGRLHLGH. The 'KMSKS' region signature appears at 527–531; that stretch reads KMSKS. Lys530 contacts ATP.

It belongs to the class-I aminoacyl-tRNA synthetase family. ValS type 2 subfamily.

The protein resides in the cytoplasm. It carries out the reaction tRNA(Val) + L-valine + ATP = L-valyl-tRNA(Val) + AMP + diphosphate. Its function is as follows. Catalyzes the attachment of valine to tRNA(Val). As ValRS can inadvertently accommodate and process structurally similar amino acids such as threonine, to avoid such errors, it has a 'posttransfer' editing activity that hydrolyzes mischarged Thr-tRNA(Val) in a tRNA-dependent manner. This Methanocaldococcus jannaschii (strain ATCC 43067 / DSM 2661 / JAL-1 / JCM 10045 / NBRC 100440) (Methanococcus jannaschii) protein is Valine--tRNA ligase.